The chain runs to 529 residues: Tyrosine--tRNA ligase, cytoplasmic (529 aa).

Tyr39 contributes to the L-tyrosine binding site. The 'HIGH' region signature appears at 44 to 52 (TTGKPHVAY). Residues Tyr166, Gln170, Asp173, and Gln188 each coordinate L-tyrosine. Residues 222 to 226 (KMSSS) carry the 'KMSKS' region motif. Residues 242–247 (KKKLKK) carry the Nuclear localization signal motif. The tract at residues 335-362 (KLTSSAYPEPSKNKGGVKGNPKQTTDDD) is disordered. The 105-residue stretch at 365-469 (IPSRLDIRVG…EGSAAGDRVY (105 aa)) folds into the tRNA-binding domain.

Belongs to the class-I aminoacyl-tRNA synthetase family. In terms of assembly, homodimer.

It localises to the cytoplasm. It is found in the nucleus. It catalyses the reaction tRNA(Tyr) + L-tyrosine + ATP = L-tyrosyl-tRNA(Tyr) + AMP + diphosphate + H(+). Catalyzes the attachment of tyrosine to tRNA(Tyr) in a two-step reaction: tyrosine is first activated by ATP to form Tyr-AMP and then transferred to the acceptor end of tRNA(Tyr). In Danio rerio (Zebrafish), this protein is Tyrosine--tRNA ligase, cytoplasmic (yars1).